Reading from the N-terminus, the 391-residue chain is Secreted aspartic protease 1 (391 aa).

The first 18 residues, 1–18 (MFLKNIFIALAIALLVDA), serve as a signal peptide directing secretion. The propeptide at 19–50 (SPAKRSPGFVTLDFDVIKTPVNATGQEGKVKR) is activation peptide. Residue asparagine 40 is glycosylated (N-linked (GlcNAc...) asparagine). Residues 64–377 (YAADITIGSN…DLDDDKISLA (314 aa)) enclose the Peptidase A1 domain. Aspartate 82 is an active-site residue. Residue 82 to 84 (DTG) coordinates pepstatin A. An intrachain disulfide couples cysteine 97 to cysteine 109. Residues aspartate 241 and aspartate 263 each coordinate Zn(2+). The active site involves aspartate 267. 267–271 (DSGTT) is a pepstatin A binding site. The cysteines at positions 305 and 343 are disulfide-linked.

This sequence belongs to the peptidase A1 family. Monomer.

The protein resides in the secreted. The enzyme catalyses Preferential cleavage at the carboxyl of hydrophobic amino acids, but fails to cleave 15-Leu-|-Tyr-16, 16-Tyr-|-Leu-17 and 24-Phe-|-Phe-25 of insulin B chain. Activates trypsinogen, and degrades keratin.. Inhibited by pepstatin A analogs and squash aspartic peptidase inhibitor (SQAPI). In terms of biological role, secreted aspartic peptidases (SAPs) are a group of ten acidic hydrolases considered as key virulence factors. These enzymes supply the fungus with nutrient amino acids as well as are able to degrade the selected host's proteins involved in the immune defense. Induces host inflammatory cytokine production in a proteolytic activity-independent way. Plays a role in tissue damage during superficial infection. Moreover, acts toward human hemoglobin though limited proteolysis to generate a variety of antimicrobial hemocidins, enabling to compete with the other microorganisms of the same physiological niche using the microbicidal peptides generated from the host protein. Its function is as follows. Plays a key role in defense against host by cleaving histatin-5 (Hst 5), a peptide from human saliva that carries out fungicidal activity. The cleavage rate decreases in an order of SAP2 &gt; SAP9 &gt; SAP3 &gt; SAP7 &gt; SAP4 &gt; SAP1 &gt; SAP8. The first cleavage occurs between residues 'Lys-17' and 'His-18' of Hst 5, giving DSHAKRHHGYKRKFHEK and HHSHRGY peptides. Further fragmentation by SAP1 results in AKRHHGYKRKFHEK and AKRHHGY products. This is Secreted aspartic protease 1 from Candida albicans (Yeast).